Consider the following 242-residue polypeptide: UPF0309 protein BH3325 (242 aa).

The region spanning 34 to 217 is the SIS domain; sequence VSEAVMNGGR…HLLVQQGFEP (184 aa).

Belongs to the UPF0309 family.

The chain is UPF0309 protein BH3325 from Halalkalibacterium halodurans (strain ATCC BAA-125 / DSM 18197 / FERM 7344 / JCM 9153 / C-125) (Bacillus halodurans).